The primary structure comprises 43 residues: Protein PsbN (43 aa).

A helical transmembrane segment spans residues 5 to 27; that stretch reads TIFSIFFSCLLIGLTGYSLYTSF.

The protein belongs to the PsbN family.

Its subcellular location is the plastid. It is found in the chloroplast thylakoid membrane. In terms of biological role, may play a role in photosystem I and II biogenesis. The protein is Protein PsbN of Mesostigma viride (Green alga).